Here is an 837-residue protein sequence, read N- to C-terminus: Tuftelin-interacting protein 11 (837 aa).

Over residues 1 to 13 the composition is skewed to basic and acidic residues; sequence MSLSHLYRDGEGH. Disordered regions lie at residues 1–31, 54–73, and 85–133; these read MSLS…DWDL, WAER…RARD, and LKKG…KGFA. The tract at residues 1-50 is required for interaction with DHX15; that stretch reads MSLSHLYRDGEGHMDDDDDERENFEITDWDLQNEFNPNRQRHWQTKEEAT. Ser-2 carries the phosphoserine modification. Over residues 14 to 28 the composition is skewed to acidic residues; it reads MDDDDDERENFEITD. Over residues 54–64 the composition is skewed to basic and acidic residues; it reads WAERDSDEERP. Phosphoserine occurs at positions 59 and 98. Residues 91–102 show a composition bias toward acidic residues; sequence EEAELEDSEDEE. The span at 103–116 shows a compositional bias: basic and acidic residues; that stretch reads KPVKQDDFPKDFGP. At Ser-144 the chain carries Phosphoserine. Residues 149 to 195 form the G-patch domain; that stretch reads TKGIGQKLLQKMGYVPGRGLGKNAQGIINPIEAKQRKGKGAVGAYGS. Disordered stretches follow at residues 183-236 and 289-312; these read QRKG…KKKP and HNVP…EAKA. Residue Ser-210 is modified to Phosphoserine. Residues 217-231 show a composition bias toward basic and acidic residues; that stretch reads EFQKELSQWRKDPSG. Residues 700–705 carry the Nuclear localization signal motif; that stretch reads VKDKFN. The segment at 710 to 734 is required for nuclear speckle localization; it reads IMNRAVSSNVGAYMQPGARENIAYL.

It belongs to the TFP11/STIP family. In terms of assembly, identified in the spliceosome C complex. Found in the Intron Large (IL) complex, a post-mRNA release spliceosomal complex containing the excised intron, U2, U5 and U6 snRNPs, and splicing factors. Interacts with TUFT1. Interacts with DHX15; indicative for a recruitment of DHX15 to the IL complex. Interacts with GCFC2.

It localises to the cytoplasm. It is found in the nucleus. Functionally, involved in pre-mRNA splicing, specifically in spliceosome disassembly during late-stage splicing events. Intron turnover seems to proceed through reactions in two lariat-intron associated complexes termed Intron Large (IL) and Intron Small (IS). In cooperation with DHX15 seems to mediate the transition of the U2, U5 and U6 snRNP-containing IL complex to the snRNP-free IS complex leading to efficient debranching and turnover of excised introns. May play a role in the differentiation of ameloblasts and odontoblasts or in the forming of the enamel extracellular matrix. The protein is Tuftelin-interacting protein 11 (TFIP11) of Canis lupus familiaris (Dog).